Consider the following 216-residue polypeptide: Uracil phosphoribosyltransferase (216 aa).

30-34 provides a ligand contact to GTP; it reads KNLVR. 5-phospho-alpha-D-ribose 1-diphosphate is bound by residues R80, R105, and 140–148; that span reads DPMIATAST. Uracil is bound by residues I203 and 208 to 210; that span reads GDA. A 5-phospho-alpha-D-ribose 1-diphosphate-binding site is contributed by D209.

Belongs to the UPRTase family. Requires Mg(2+) as cofactor.

The enzyme catalyses UMP + diphosphate = 5-phospho-alpha-D-ribose 1-diphosphate + uracil. It participates in pyrimidine metabolism; UMP biosynthesis via salvage pathway; UMP from uracil: step 1/1. With respect to regulation, allosterically activated by GTP. Functionally, catalyzes the conversion of uracil and 5-phospho-alpha-D-ribose 1-diphosphate (PRPP) to UMP and diphosphate. The polypeptide is Uracil phosphoribosyltransferase (Saccharolobus islandicus (strain Y.N.15.51 / Yellowstone #2) (Sulfolobus islandicus)).